The chain runs to 657 residues: Penicillin-binding protein activator LpoA (657 aa).

The N-terminal stretch at 1-25 is a signal peptide; the sequence is MLSSTFVRSKAGLVPVILAALILAA. The N-palmitoyl cysteine moiety is linked to residue Cys26. A lipid anchor (S-diacylglycerol cysteine) is attached at Cys26.

Belongs to the LpoA family. As to quaternary structure, interacts with PBP1a.

The protein resides in the cell outer membrane. Regulator of peptidoglycan synthesis that is essential for the function of penicillin-binding protein 1A (PBP1a). This chain is Penicillin-binding protein activator LpoA, found in Yersinia pestis bv. Antiqua (strain Angola).